We begin with the raw amino-acid sequence, 391 residues long: Na(+)/H(+) antiporter NhaA 2 (391 aa).

Helical transmembrane passes span 25–45 (AGGI…NSPL), 56–76 (VWLG…IFFL), 98–118 (ALPG…YIAI), 128–148 (GWAI…SLLG), 157–177 (VFLA…IAFF), 180–200 (SGLN…LVAL), 208–228 (LLPY…SGVH), 264–284 (VAFA…LSGI), 297–317 (VALG…VLAI), 335–355 (GVAI…NLAF), and 364–384 (EVKV…IVLL).

It belongs to the NhaA Na(+)/H(+) (TC 2.A.33) antiporter family.

Its subcellular location is the cell inner membrane. It carries out the reaction Na(+)(in) + 2 H(+)(out) = Na(+)(out) + 2 H(+)(in). Na(+)/H(+) antiporter that extrudes sodium in exchange for external protons. In Pseudomonas syringae pv. tomato (strain ATCC BAA-871 / DC3000), this protein is Na(+)/H(+) antiporter NhaA 2.